A 282-amino-acid chain; its full sequence is Bifunctional protein FolD (282 aa).

Residues 164-166 (GRS) and S189 contribute to the NADP(+) site.

Belongs to the tetrahydrofolate dehydrogenase/cyclohydrolase family. In terms of assembly, homodimer.

The catalysed reaction is (6R)-5,10-methylene-5,6,7,8-tetrahydrofolate + NADP(+) = (6R)-5,10-methenyltetrahydrofolate + NADPH. The enzyme catalyses (6R)-5,10-methenyltetrahydrofolate + H2O = (6R)-10-formyltetrahydrofolate + H(+). The protein operates within one-carbon metabolism; tetrahydrofolate interconversion. Its function is as follows. Catalyzes the oxidation of 5,10-methylenetetrahydrofolate to 5,10-methenyltetrahydrofolate and then the hydrolysis of 5,10-methenyltetrahydrofolate to 10-formyltetrahydrofolate. The chain is Bifunctional protein FolD from Anaeromyxobacter dehalogenans (strain 2CP-C).